The following is a 191-amino-acid chain: tRNA-specific adenosine deaminase 2 (191 aa).

A CMP/dCMP-type deaminase domain is found at E20–L145. H71 is a binding site for Zn(2+). E73 serves as the catalytic Proton donor. Residues C107 and C110 each contribute to the Zn(2+) site.

This sequence belongs to the cytidine and deoxycytidylate deaminase family. ADAT2 subfamily. The cofactor is Zn(2+).

It catalyses the reaction adenosine(34) in tRNA + H2O + H(+) = inosine(34) in tRNA + NH4(+). Functionally, probably participates in deamination of adenosine-34 to inosine in many tRNAs. The polypeptide is tRNA-specific adenosine deaminase 2 (ADAT2) (Homo sapiens (Human)).